The following is a 361-amino-acid chain: Ornithine carbamoyltransferase, mitochondrial (361 aa).

The N-terminal 24 residues, 1-24 (MIPTARCGALRQKIPVQAVRQYSS), are a transit peptide targeting the mitochondrion. Carbamoyl phosphate contacts are provided by residues 89–92 (STRT), arginine 140, histidine 167, and glutamine 170. Positions 207, 273, 277, and 278 each coordinate L-ornithine. Cysteine 315 acts as the Proton acceptor in catalysis. Carbamoyl phosphate is bound by residues 315-316 (CL) and arginine 342.

It belongs to the aspartate/ornithine carbamoyltransferase superfamily. OTCase family. In terms of assembly, homotrimer.

It is found in the mitochondrion matrix. It carries out the reaction carbamoyl phosphate + L-ornithine = L-citrulline + phosphate + H(+). It participates in amino-acid biosynthesis; L-arginine biosynthesis; L-arginine from L-ornithine and carbamoyl phosphate: step 1/3. The protein is Ornithine carbamoyltransferase, mitochondrial (arg1) of Aspergillus terreus.